We begin with the raw amino-acid sequence, 220 residues long: Redox-sensing transcriptional repressor Rex (220 aa).

Positions 17-56 (LYARSLRYLLQEGVESVSSQELGDRINVTAAQIRKDLSYF) form a DNA-binding region, H-T-H motif. 91–96 (GIGHLG) contacts NAD(+).

Belongs to the transcriptional regulatory Rex family. Homodimer.

Its subcellular location is the cytoplasm. In terms of biological role, modulates transcription in response to changes in cellular NADH/NAD(+) redox state. This is Redox-sensing transcriptional repressor Rex from Roseiflexus sp. (strain RS-1).